The primary structure comprises 339 residues: UDP-3-O-acylglucosamine N-acyltransferase (339 aa).

H248 functions as the Proton acceptor in the catalytic mechanism.

The protein belongs to the transferase hexapeptide repeat family. LpxD subfamily. In terms of assembly, homotrimer.

The catalysed reaction is a UDP-3-O-[(3R)-3-hydroxyacyl]-alpha-D-glucosamine + a (3R)-hydroxyacyl-[ACP] = a UDP-2-N,3-O-bis[(3R)-3-hydroxyacyl]-alpha-D-glucosamine + holo-[ACP] + H(+). Its pathway is bacterial outer membrane biogenesis; LPS lipid A biosynthesis. Functionally, catalyzes the N-acylation of UDP-3-O-acylglucosamine using 3-hydroxyacyl-ACP as the acyl donor. Is involved in the biosynthesis of lipid A, a phosphorylated glycolipid that anchors the lipopolysaccharide to the outer membrane of the cell. This is UDP-3-O-acylglucosamine N-acyltransferase from Caulobacter vibrioides (strain NA1000 / CB15N) (Caulobacter crescentus).